The following is a 350-amino-acid chain: N-acetyl-gamma-glutamyl-phosphate reductase (350 aa).

Cys-154 is a catalytic residue.

This sequence belongs to the NAGSA dehydrogenase family. Type 1 subfamily.

The protein localises to the cytoplasm. The enzyme catalyses N-acetyl-L-glutamate 5-semialdehyde + phosphate + NADP(+) = N-acetyl-L-glutamyl 5-phosphate + NADPH + H(+). It participates in amino-acid biosynthesis; L-arginine biosynthesis; N(2)-acetyl-L-ornithine from L-glutamate: step 3/4. Functionally, catalyzes the NADPH-dependent reduction of N-acetyl-5-glutamyl phosphate to yield N-acetyl-L-glutamate 5-semialdehyde. This is N-acetyl-gamma-glutamyl-phosphate reductase from Corynebacterium efficiens (strain DSM 44549 / YS-314 / AJ 12310 / JCM 11189 / NBRC 100395).